We begin with the raw amino-acid sequence, 354 residues long: Histidinol-phosphate aminotransferase (354 aa).

Position 210 is an N6-(pyridoxal phosphate)lysine (Lys-210).

Belongs to the class-II pyridoxal-phosphate-dependent aminotransferase family. Histidinol-phosphate aminotransferase subfamily. As to quaternary structure, homodimer. It depends on pyridoxal 5'-phosphate as a cofactor.

It catalyses the reaction L-histidinol phosphate + 2-oxoglutarate = 3-(imidazol-4-yl)-2-oxopropyl phosphate + L-glutamate. Its pathway is amino-acid biosynthesis; L-histidine biosynthesis; L-histidine from 5-phospho-alpha-D-ribose 1-diphosphate: step 7/9. The polypeptide is Histidinol-phosphate aminotransferase (Clostridium botulinum (strain ATCC 19397 / Type A)).